A 165-amino-acid chain; its full sequence is ADP-ribosylation factor-like protein 3 (165 aa).

The N-myristoyl glycine moiety is linked to residue G2. S5 carries the post-translational modification Phosphoserine. GTP is bound by residues 24–31, 67–71, and 109–112; these read GLDNAGKT, DIGGQ, and NKQD.

Belongs to the small GTPase superfamily. Arf family. As to quaternary structure, found in a complex with ARL3, RP2 and UNC119 (or UNC119B); RP2 induces hydrolysis of GTP ARL3 in the complex, leading to the release of UNC119 (or UNC119B). Interacts with RP2; interaction is direct and stimulated with the activated GTP-bound form of ARL3. Interacts with SYS1. Interacts with ARL2BP; the GTP-bound form interacts with ARL2BP. Microtubule-associated protein. Does not interact with TBCC. Interacts with RP2. Interacts with PDE6D; the interaction occurs specifically with the GTP-bound form of ARL3. Interacts with GGA1; the interaction recruits PKD1:PKD2 complex to trans-Golgi network and is required for ciliary targeting of PKD1:PKD2 complex. Interacts with DNAAF9.

The protein resides in the golgi apparatus membrane. The protein localises to the cytoplasm. Its subcellular location is the cytoskeleton. It localises to the spindle. It is found in the nucleus. The protein resides in the microtubule organizing center. The protein localises to the centrosome. Its subcellular location is the cell projection. It localises to the cilium. In terms of biological role, small GTP-binding protein which cycles between an inactive GDP-bound and an active GTP-bound form, and the rate of cycling is regulated by guanine nucleotide exchange factors (GEF) and GTPase-activating proteins (GAP). Required for normal cytokinesis and cilia signaling. Requires assistance from GTPase-activating proteins (GAPs) like RP2 and PDE6D, in order to cycle between inactive GDP-bound and active GTP-bound forms. Required for targeting proteins to the cilium, including myristoylated NPHP3 and prenylated INPP5E. Targets NPHP3 to the ciliary membrane by releasing myristoylated NPHP3 from UNC119B cargo adapter into the cilium. Required for PKD1:PKD2 complex targeting from the trans-Golgi network to the cilium. This Pongo abelii (Sumatran orangutan) protein is ADP-ribosylation factor-like protein 3 (ARL3).